The primary structure comprises 552 residues: Urocanate hydratase (552 aa).

NAD(+) contacts are provided by residues 50–51 (GG), Gln128, 174–176 (GMG), Glu194, Arg199, 261–265 (QTSAH), 271–272 (YI), and Tyr320. The active site involves Cys408. Gly490 contacts NAD(+).

The protein belongs to the urocanase family. NAD(+) is required as a cofactor.

The protein localises to the cytoplasm. It carries out the reaction 4-imidazolone-5-propanoate = trans-urocanate + H2O. It participates in amino-acid degradation; L-histidine degradation into L-glutamate; N-formimidoyl-L-glutamate from L-histidine: step 2/3. Its function is as follows. Catalyzes the conversion of urocanate to 4-imidazolone-5-propionate. This Bdellovibrio bacteriovorus (strain ATCC 15356 / DSM 50701 / NCIMB 9529 / HD100) protein is Urocanate hydratase.